The primary structure comprises 102 residues: MHGTCLSGLYPVPFTHKAHDYPHFNIYISFSGPKYCITALNTCVIPLLHHILTTQCITLMLILQKIQHQNHLNIKIIIFQLYKINILTCGHYPLNSIPFTVT.

Belongs to the UPF0320 family.

In Saccharomyces cerevisiae (strain ATCC 204508 / S288c) (Baker's yeast), this protein is Putative UPF0320 protein YMR326C.